The following is a 293-amino-acid chain: MEKGTFHIKTGFAEMFKGGVIMDVTTPEQAVIAEEAGAVAVMALERVPADIRAQGGVARMSDPKIIKEIMAAVSIPVMAKVRIGHFVEAMILEAIGVDFIDESEVLTPADEEHHIDKWKFKVPFVCGARNLGEALRRIAEGAAMIRTKGEAGTGNVVEAVRHARTMWKEIRYVQSLREDELMAYAKEIGAPFELVKWVHDHGRLPVVNFAAGGIATPADAALMMHLGMDGVFVGSGIFKSGDPRKRARAIVRAVAHYNDPEVLAEVSEDLGEPMVGINLDQLKEEERLAKRGW.

Residue Asp-23 participates in D-ribose 5-phosphate binding. The active-site Schiff-base intermediate with D-ribose 5-phosphate is Lys-80. Residue Gly-152 participates in D-ribose 5-phosphate binding. Arg-164 is a D-glyceraldehyde 3-phosphate binding site. D-ribose 5-phosphate is bound by residues Gly-213 and 234 to 235 (GS).

This sequence belongs to the PdxS/SNZ family. In terms of assembly, in the presence of PdxT, forms a dodecamer of heterodimers.

The catalysed reaction is aldehydo-D-ribose 5-phosphate + D-glyceraldehyde 3-phosphate + L-glutamine = pyridoxal 5'-phosphate + L-glutamate + phosphate + 3 H2O + H(+). Its pathway is cofactor biosynthesis; pyridoxal 5'-phosphate biosynthesis. Catalyzes the formation of pyridoxal 5'-phosphate from ribose 5-phosphate (RBP), glyceraldehyde 3-phosphate (G3P) and ammonia. The ammonia is provided by the PdxT subunit. Can also use ribulose 5-phosphate and dihydroxyacetone phosphate as substrates, resulting from enzyme-catalyzed isomerization of RBP and G3P, respectively. This chain is Pyridoxal 5'-phosphate synthase subunit PdxS, found in Thermus thermophilus (strain ATCC BAA-163 / DSM 7039 / HB27).